A 462-amino-acid polypeptide reads, in one-letter code: Chitinase 1 (462 aa).

A signal peptide spans 1–17; the sequence is MILNLIILLAISIVASA. The GH18 domain occupies 18-291; that stretch reads SNIAAYWGQN…NQLYQALSGS (274 aa). Residue Asn57 is glycosylated (N-linked (GlcNAc...) asparagine). Residue Glu147 is the Proton donor of the active site.

It belongs to the glycosyl hydrolase 18 family. Chitinase class III subfamily.

It localises to the secreted. The catalysed reaction is Random endo-hydrolysis of N-acetyl-beta-D-glucosaminide (1-&gt;4)-beta-linkages in chitin and chitodextrins.. The protein is Chitinase 1 (CHT1) of Candida albicans (Yeast).